The chain runs to 142 residues: Regulatory protein RecX (142 aa).

It belongs to the RecX family.

The protein localises to the cytoplasm. In terms of biological role, modulates RecA activity. This chain is Regulatory protein RecX, found in Thermus thermophilus (strain ATCC BAA-163 / DSM 7039 / HB27).